The primary structure comprises 130 residues: S-adenosylmethionine decarboxylase proenzyme (130 aa).

Residue serine 63 is the Schiff-base intermediate with substrate; via pyruvic acid of the active site. Serine 63 bears the Pyruvic acid (Ser); by autocatalysis mark. The active-site Proton acceptor; for processing activity is histidine 68. Residue cysteine 83 is the Proton donor; for catalytic activity of the active site.

The protein belongs to the prokaryotic AdoMetDC family. Type 1 subfamily. In terms of assembly, heterotetramer of two alpha and two beta chains arranged as a dimer of alpha/beta heterodimers. Pyruvate serves as cofactor. In terms of processing, is synthesized initially as an inactive proenzyme. Formation of the active enzyme involves a self-maturation process in which the active site pyruvoyl group is generated from an internal serine residue via an autocatalytic post-translational modification. Two non-identical subunits are generated from the proenzyme in this reaction, and the pyruvate is formed at the N-terminus of the alpha chain, which is derived from the carboxyl end of the proenzyme. The post-translation cleavage follows an unusual pathway, termed non-hydrolytic serinolysis, in which the side chain hydroxyl group of the serine supplies its oxygen atom to form the C-terminus of the beta chain, while the remainder of the serine residue undergoes an oxidative deamination to produce ammonia and the pyruvoyl group blocking the N-terminus of the alpha chain.

The enzyme catalyses S-adenosyl-L-methionine + H(+) = S-adenosyl 3-(methylsulfanyl)propylamine + CO2. The protein operates within amine and polyamine biosynthesis; S-adenosylmethioninamine biosynthesis; S-adenosylmethioninamine from S-adenosyl-L-methionine: step 1/1. Functionally, catalyzes the decarboxylation of S-adenosylmethionine to S-adenosylmethioninamine (dcAdoMet), the propylamine donor required for the synthesis of the polyamines spermine and spermidine from the diamine putrescine. This Thermosipho africanus (strain TCF52B) protein is S-adenosylmethionine decarboxylase proenzyme.